The primary structure comprises 342 residues: CD2 antigen cytoplasmic tail-binding protein 2 (342 aa).

A disordered region spans residues 1-64 (MPKRKVTFQG…DEEGSSKYDI (64 aa)). Lysine 26 is covalently cross-linked (Glycyl lysine isopeptide (Lys-Gly) (interchain with G-Cter in SUMO2)). Residue lysine 44 is modified to N6-acetyllysine. Phosphoserine occurs at positions 46, 49, and 117. Disordered regions lie at residues 130-150 (RPPD…GQTP) and 177-200 (LGAR…PQRL). Serine 196 bears the Phosphoserine mark. The GYF domain maps to 281-339 (DVMWEYKWENTGDAELYGPFTSAQMQTWVSEGYFPDGVYCRKLDPPGGQFYNSKRIDFE).

In terms of assembly, component of the U5 snRNP complex composed of the U5 snRNA and at least PRPF6, PRPF8, SNRNP200, EFTUD2, SNRNP40, DDX23, TXNL4A and CD2BP2. Interacts directly with TXNL4A and PRPF6. Interacts (via GYF domain) with CD2 (via Pro-rich sequence in the cytoplasmic domain). Interacts with PQBP1.

The protein resides in the cytoplasm. The protein localises to the nucleus. Involved in pre-mRNA splicing as component of the U5 snRNP complex that is involved in spliceosome assembly. The sequence is that of CD2 antigen cytoplasmic tail-binding protein 2 (Cd2bp2) from Mus musculus (Mouse).